The following is a 700-amino-acid chain: Chondroitinase-AC (700 aa).

An N-terminal signal peptide occupies residues 1 to 22 (MKKLFVTCIVFFSILSPALLIA). Catalysis depends on residues His225, Tyr234, and Arg288. Ser328 carries O-linked (Man...) serine glycosylation. The Ca(2+) site is built by Glu405, Asp407, Asp416, and Tyr417. Ser455 is a glycosylation site (O-linked (Man...) serine).

The protein belongs to the polysaccharide lyase 8 family. In terms of assembly, monomer. Ca(2+) is required as a cofactor.

It catalyses the reaction Eliminative degradation of polysaccharides containing 1,4-beta-D-hexosaminyl and 1,3-beta-D-glucuronosyl linkages to disaccharides containing 4-deoxy-beta-D-gluc-4-enuronosyl groups.. This chain is Chondroitinase-AC (cslA), found in Pedobacter heparinus (strain ATCC 13125 / DSM 2366 / CIP 104194 / JCM 7457 / NBRC 12017 / NCIMB 9290 / NRRL B-14731 / HIM 762-3).